The primary structure comprises 104 residues: Thioredoxin (104 aa).

The 103-residue stretch at 2-104 (AIVKVTDSNF…NLAEVLDKHL (103 aa)) folds into the Thioredoxin domain. C29 and C32 are disulfide-bonded.

It belongs to the thioredoxin family.

Functionally, component of the thioredoxin-thioredoxin reductase system. Participates in various redox reactions through the reversible oxidation of its active center dithiol to a disulfide and catalyzes dithiol-disulfide exchange reactions. The sequence is that of Thioredoxin (trxA) from Staphylococcus haemolyticus (strain JCSC1435).